We begin with the raw amino-acid sequence, 436 residues long: uncharacterized protein (436 aa).

This is an uncharacterized protein from Diadromus pulchellus (Parasitic wasp).